Here is an 837-residue protein sequence, read N- to C-terminus: Semaphorin-4B (837 aa).

Residues 1 to 43 (MLRTAMGLRSWLAAPWGALPPRPPLLLLLLLLLLLQPPPPTWA) form the signal peptide. Residues 44–717 (LSPRISLPLG…WGADRSYWKE (674 aa)) are Extracellular-facing. Positions 47 to 523 (RISLPLGSEE…SHSGVVQVPM (477 aa)) constitute a Sema domain. N-linked (GlcNAc...) asparagine glycans are attached at residues N69 and N96. 2 disulfide bridges follow: C120-C131 and C149-C158. N165 is a glycosylation site (N-linked (GlcNAc...) asparagine). Intrachain disulfides connect C286/C399 and C310/C359. 2 N-linked (GlcNAc...) asparagine glycosylation sites follow: N410 and N525. The PSI domain maps to 525-579 (NCSLYRSCGDCLLARDPYCAWSGSSCKHVSLYQPQLATRPWIQDIEGASAKDLCS). 2 cysteine pairs are disulfide-bonded: C526/C543 and C611/C656. The Ig-like C2-type domain maps to 604–663 (NTVNTLACPLLSNLATRLWLRNGAPVNASASCHVLPTGDLLLVGTQQLGEFQCWSLEEGF). An N-linked (GlcNAc...) asparagine glycan is attached at N630. Residues 718–738 (FLVMCTLFVLAVLLPVLFLLY) traverse the membrane as a helical segment. At 739 to 837 (RHRNSMKVFL…LGSEIRDSVV (99 aa)) the chain is on the cytoplasmic side. Residues 767 to 805 (PETRPLNGLGPPSTPLDHRGYQSLSDSPPGSRVFTESEK) are disordered. A phosphoserine mark is found at S793, S818, and S830.

The protein belongs to the semaphorin family.

It localises to the membrane. Functionally, inhibits axonal extension by providing local signals to specify territories inaccessible for growing axons. This Homo sapiens (Human) protein is Semaphorin-4B.